A 308-amino-acid chain; its full sequence is Ribosomal protein L11 methyltransferase (308 aa).

S-adenosyl-L-methionine-binding residues include T160, G181, D203, and N245.

It belongs to the methyltransferase superfamily. PrmA family.

The protein resides in the cytoplasm. The catalysed reaction is L-lysyl-[protein] + 3 S-adenosyl-L-methionine = N(6),N(6),N(6)-trimethyl-L-lysyl-[protein] + 3 S-adenosyl-L-homocysteine + 3 H(+). In terms of biological role, methylates ribosomal protein L11. This is Ribosomal protein L11 methyltransferase from Thermoanaerobacter pseudethanolicus (strain ATCC 33223 / 39E) (Clostridium thermohydrosulfuricum).